Reading from the N-terminus, the 426-residue chain is Tol-Pal system protein TolB (426 aa).

The signal sequence occupies residues 1–25 (MNAMSRISRRIFLALALSLAGLAQA).

It belongs to the TolB family. In terms of assembly, the Tol-Pal system is composed of five core proteins: the inner membrane proteins TolA, TolQ and TolR, the periplasmic protein TolB and the outer membrane protein Pal. They form a network linking the inner and outer membranes and the peptidoglycan layer.

The protein resides in the periplasm. Functionally, part of the Tol-Pal system, which plays a role in outer membrane invagination during cell division and is important for maintaining outer membrane integrity. The sequence is that of Tol-Pal system protein TolB from Dechloromonas aromatica (strain RCB).